A 169-amino-acid polypeptide reads, in one-letter code: ATP synthase subunit b (169 aa).

A helical membrane pass occupies residues 13–33 (LFLFQLINFLIIVFILKKFLF).

It belongs to the ATPase B chain family. In terms of assembly, F-type ATPases have 2 components, F(1) - the catalytic core - and F(0) - the membrane proton channel. F(1) has five subunits: alpha(3), beta(3), gamma(1), delta(1), epsilon(1). F(0) has three main subunits: a(1), b(2) and c(10-14). The alpha and beta chains form an alternating ring which encloses part of the gamma chain. F(1) is attached to F(0) by a central stalk formed by the gamma and epsilon chains, while a peripheral stalk is formed by the delta and b chains.

Its subcellular location is the cell inner membrane. Functionally, f(1)F(0) ATP synthase produces ATP from ADP in the presence of a proton or sodium gradient. F-type ATPases consist of two structural domains, F(1) containing the extramembraneous catalytic core and F(0) containing the membrane proton channel, linked together by a central stalk and a peripheral stalk. During catalysis, ATP synthesis in the catalytic domain of F(1) is coupled via a rotary mechanism of the central stalk subunits to proton translocation. Component of the F(0) channel, it forms part of the peripheral stalk, linking F(1) to F(0). This Endomicrobium trichonymphae protein is ATP synthase subunit b.